The chain runs to 82 residues: MSKGHSLQDPYLNTLRKERVPVSIYLVNGIKLQGQIESFDQFVILLKNTVSQMVYKTAISTVVPSRPVRLPSGDQPAEPGNA.

In terms of domain architecture, Sm spans 9-68 (DPYLNTLRKERVPVSIYLVNGIKLQGQIESFDQFVILLKNTVSQMVYKTAISTVVPSRPV).

It belongs to the Hfq family. As to quaternary structure, homohexamer.

Functionally, RNA chaperone that binds small regulatory RNA (sRNAs) and mRNAs to facilitate mRNA translational regulation in response to envelope stress, environmental stress and changes in metabolite concentrations. Also binds with high specificity to tRNAs. This chain is RNA-binding protein Hfq, found in Pseudomonas aeruginosa.